The following is a 218-amino-acid chain: Ribonuclease T (218 aa).

The Exonuclease domain maps to 24-198 (VIIDVETAGF…YDAERTAELF (175 aa)). Mg(2+) contacts are provided by aspartate 27, glutamate 29, histidine 185, and aspartate 190. The active-site Proton donor/acceptor is histidine 185.

The protein belongs to the RNase T family. As to quaternary structure, homodimer. Mg(2+) is required as a cofactor.

Functionally, trims short 3' overhangs of a variety of RNA species, leaving a one or two nucleotide 3' overhang. Responsible for the end-turnover of tRNA: specifically removes the terminal AMP residue from uncharged tRNA (tRNA-C-C-A). Also appears to be involved in tRNA biosynthesis. The sequence is that of Ribonuclease T from Histophilus somni (strain 129Pt) (Haemophilus somnus).